The chain runs to 179 residues: Adenine phosphoribosyltransferase (179 aa).

This sequence belongs to the purine/pyrimidine phosphoribosyltransferase family. As to quaternary structure, homodimer.

It localises to the cytoplasm. It carries out the reaction AMP + diphosphate = 5-phospho-alpha-D-ribose 1-diphosphate + adenine. The protein operates within purine metabolism; AMP biosynthesis via salvage pathway; AMP from adenine: step 1/1. Its function is as follows. Catalyzes a salvage reaction resulting in the formation of AMP, that is energically less costly than de novo synthesis. In Bradyrhizobium sp. (strain BTAi1 / ATCC BAA-1182), this protein is Adenine phosphoribosyltransferase.